Here is a 276-residue protein sequence, read N- to C-terminus: Kallikrein-11 (276 aa).

A signal peptide spans 1–44 (MRRLKSDWKLSTETREPGARPALLQARMILRLIALALVTGHVGG). Residues 45–47 (ETR) constitute a propeptide, activation peptide. The 227-residue stretch at 48–274 (IIKGYECRPH…YFNWIHEVMR (227 aa)) folds into the Peptidase S1 domain. 5 disulfides stabilise this stretch: cysteine 54–cysteine 189, cysteine 73–cysteine 89, cysteine 168–cysteine 235, cysteine 200–cysteine 214, and cysteine 225–cysteine 250. Catalysis depends on histidine 88, which acts as the Charge relay system. Asparagine 125 carries an N-linked (GlcNAc...) asparagine glycan. Aspartate 136 (charge relay system) is an active-site residue. 2 N-linked (GlcNAc...) asparagine glycosylation sites follow: asparagine 191 and asparagine 207. Catalysis depends on serine 229, which acts as the Charge relay system. An N-linked (GlcNAc...) asparagine glycan is attached at asparagine 236.

It belongs to the peptidase S1 family. Kallikrein subfamily. As to expression, expressed in brain and prostate (isoform 1) and prostate (isoform 2).

It is found in the secreted. Functionally, possible multifunctional protease. Efficiently cleaves 'bz-Phe-Arg-4-methylcoumaryl-7-amide', a kallikrein substrate, and weakly cleaves other substrates for kallikrein and trypsin. This Mus musculus (Mouse) protein is Kallikrein-11 (Klk11).